Here is a 366-residue protein sequence, read N- to C-terminus: Protein RecA (366 aa).

ATP is bound at residue 81 to 88 (GPESSGKT).

Belongs to the RecA family.

The protein resides in the cytoplasm. Functionally, can catalyze the hydrolysis of ATP in the presence of single-stranded DNA, the ATP-dependent uptake of single-stranded DNA by duplex DNA, and the ATP-dependent hybridization of homologous single-stranded DNAs. It interacts with LexA causing its activation and leading to its autocatalytic cleavage. The chain is Protein RecA from Leptospira interrogans serogroup Icterohaemorrhagiae serovar copenhageni (strain Fiocruz L1-130).